We begin with the raw amino-acid sequence, 439 residues long: Ribosomal protein uS12 methylthiotransferase RimO (439 aa).

An MTTase N-terminal domain is found at 2 to 114; the sequence is SKLYLMSLGC…IDEMILKKTN (113 aa). The [4Fe-4S] cluster site is built by Cys-11, Cys-45, Cys-77, Cys-146, Cys-150, and Cys-153. The region spanning 132-363 is the Radical SAM core domain; the sequence is TGSNSHAFIK…VDEVIEKSFE (232 aa).

It belongs to the methylthiotransferase family. RimO subfamily. The cofactor is [4Fe-4S] cluster.

The protein resides in the cytoplasm. The catalysed reaction is L-aspartate(89)-[ribosomal protein uS12]-hydrogen + (sulfur carrier)-SH + AH2 + 2 S-adenosyl-L-methionine = 3-methylsulfanyl-L-aspartate(89)-[ribosomal protein uS12]-hydrogen + (sulfur carrier)-H + 5'-deoxyadenosine + L-methionine + A + S-adenosyl-L-homocysteine + 2 H(+). Catalyzes the methylthiolation of an aspartic acid residue of ribosomal protein uS12. The sequence is that of Ribosomal protein uS12 methylthiotransferase RimO from Campylobacter jejuni subsp. jejuni serotype O:6 (strain 81116 / NCTC 11828).